A 241-amino-acid polypeptide reads, in one-letter code: Ribonuclease PH (241 aa).

Phosphate-binding positions include Arg-89 and 127 to 129; that span reads GTR.

Belongs to the RNase PH family. In terms of assembly, homohexameric ring arranged as a trimer of dimers.

The enzyme catalyses tRNA(n+1) + phosphate = tRNA(n) + a ribonucleoside 5'-diphosphate. Its function is as follows. Phosphorolytic 3'-5' exoribonuclease that plays an important role in tRNA 3'-end maturation. Removes nucleotide residues following the 3'-CCA terminus of tRNAs; can also add nucleotides to the ends of RNA molecules by using nucleoside diphosphates as substrates, but this may not be physiologically important. Probably plays a role in initiation of 16S rRNA degradation (leading to ribosome degradation) during starvation. This is Ribonuclease PH from Xanthomonas axonopodis pv. citri (strain 306).